The chain runs to 185 residues: Disulfide bond formation protein B (185 aa).

Over 1–25 (MLLFFVILGIFVLTILKAISKQRWS) the chain is Cytoplasmic. Residues 26-42 (WLLLAASALSLELSALY) traverse the membrane as a helical segment. Over 43-60 (FQHVMQLEPCVMCVYERL) the chain is Periplasmic. A disulfide bridge links cysteine 52 with cysteine 55. Residues 61–76 (AMLGILLAGLIGASSP) form a helical membrane-spanning segment. The Cytoplasmic segment spans residues 77–83 (NNVFIRL). A helical membrane pass occupies residues 84 to 101 (SAFLLWGISAVWGILLAI). Residues 102-156 (KHTDYQLHPSPFFTCDFFPNFPAWAPLHEWLPWLFNPTGDCSDIVWQFLGYSMPQ) are Periplasmic-facing. Cysteine 116 and cysteine 142 form a disulfide bridge. A helical transmembrane segment spans residues 157–175 (WLIVSFSLYTLLFIIFAIS). Over 176 to 185 (AVLKTKKQLF) the chain is Cytoplasmic.

Belongs to the DsbB family.

Its subcellular location is the cell inner membrane. Its function is as follows. Required for disulfide bond formation in some periplasmic proteins. Acts by oxidizing the DsbA protein. The polypeptide is Disulfide bond formation protein B (Psychromonas ingrahamii (strain DSM 17664 / CCUG 51855 / 37)).